An 84-amino-acid polypeptide reads, in one-letter code: Cell division topological specificity factor (84 aa).

This sequence belongs to the MinE family.

Functionally, prevents the cell division inhibition by proteins MinC and MinD at internal division sites while permitting inhibition at polar sites. This ensures cell division at the proper site by restricting the formation of a division septum at the midpoint of the long axis of the cell. This Ralstonia nicotianae (strain ATCC BAA-1114 / GMI1000) (Ralstonia solanacearum) protein is Cell division topological specificity factor.